The primary structure comprises 171 residues: Shikimate kinase (171 aa).

14–19 serves as a coordination point for ATP; sequence GAGKST. Ser-18 serves as a coordination point for Mg(2+). Residues Asp-36, Arg-60, and Gly-82 each contribute to the substrate site. An ATP-binding site is contributed by Arg-120. Arg-139 lines the substrate pocket. Residue Gln-156 coordinates ATP.

This sequence belongs to the shikimate kinase family. Monomer. Requires Mg(2+) as cofactor.

Its subcellular location is the cytoplasm. It carries out the reaction shikimate + ATP = 3-phosphoshikimate + ADP + H(+). It functions in the pathway metabolic intermediate biosynthesis; chorismate biosynthesis; chorismate from D-erythrose 4-phosphate and phosphoenolpyruvate: step 5/7. In terms of biological role, catalyzes the specific phosphorylation of the 3-hydroxyl group of shikimic acid using ATP as a cosubstrate. The sequence is that of Shikimate kinase from Shewanella oneidensis (strain ATCC 700550 / JCM 31522 / CIP 106686 / LMG 19005 / NCIMB 14063 / MR-1).